The following is a 213-amino-acid chain: Lactobacillus shifted protein (213 aa).

Residues 28 to 38 show a composition bias toward polar residues; sequence PRFTENAMQPN. Disordered stretches follow at residues 28–56 and 182–213; these read PRFTENAMQPNDPTPRPAKPNVSETDATP and PTSSYPLEPTGAAEEVNENQRVTEGATGYEQR.

The protein is Lactobacillus shifted protein (lbsA) of Emericella nidulans (strain FGSC A4 / ATCC 38163 / CBS 112.46 / NRRL 194 / M139) (Aspergillus nidulans).